We begin with the raw amino-acid sequence, 962 residues long: Glycine dehydrogenase (decarboxylating) (962 aa).

Residue Lys709 is modified to N6-(pyridoxal phosphate)lysine.

Belongs to the GcvP family. As to quaternary structure, the glycine cleavage system is composed of four proteins: P, T, L and H. Pyridoxal 5'-phosphate serves as cofactor.

The enzyme catalyses N(6)-[(R)-lipoyl]-L-lysyl-[glycine-cleavage complex H protein] + glycine + H(+) = N(6)-[(R)-S(8)-aminomethyldihydrolipoyl]-L-lysyl-[glycine-cleavage complex H protein] + CO2. In terms of biological role, the glycine cleavage system catalyzes the degradation of glycine. The P protein binds the alpha-amino group of glycine through its pyridoxal phosphate cofactor; CO(2) is released and the remaining methylamine moiety is then transferred to the lipoamide cofactor of the H protein. This is Glycine dehydrogenase (decarboxylating) from Shewanella oneidensis (strain ATCC 700550 / JCM 31522 / CIP 106686 / LMG 19005 / NCIMB 14063 / MR-1).